A 523-amino-acid polypeptide reads, in one-letter code: MNKELLDKVNKRRTFAIISHPDAGKTTITEQMLLLGGVIRSAGTVKARKTGNYATSDWMEIEKKRGISVTSSVMQFEYQGKRINILDTPGHQDFSEDTYRTLMAVDAAVMVIDSARGIEPQTKKLFKVVRQRGIPVFTFMNKLDRDGREPLDLVAELEEVLGIEGVAMNWPIGMGQSLLGLYDLANQRVELYHPEEGQDRFIALADGKAPAGSPLADDPQFEETLGEIELLEGAGASFDRAKVLAGQQTPVFFGSALTNFGVETFLEQFVDLAPAPGEHEVNGDEELKPDDDEFSGFIFKIQANMNPQHRDRIAFVRVCSGEFSKGLDVTLARTGKQVRLNNAVEFESSARVQVSEAVAGDIVGLYDTGNFQIGDSVYAGKRKLEFPPLPEFTPELFMRVSPKNVMKQKSFHKGMNQLVQEGAVQLYRNYQTDDYILGAVGQLQFEVFQYRMKNEYNSEVEMTSIGHRVARWINPDQLDPKMSSSRNLLVKDRFGNPLFLFENAFAERWFHDKYPDVELTEKL.

Residues 10–277 (NKRRTFAIIS…QFVDLAPAPG (268 aa)) enclose the tr-type G domain. Residues 19–26 (SHPDAGKT), 87–91 (DTPGH), and 141–144 (NKLD) each bind GTP.

This sequence belongs to the TRAFAC class translation factor GTPase superfamily. Classic translation factor GTPase family. PrfC subfamily.

It is found in the cytoplasm. Its function is as follows. Increases the formation of ribosomal termination complexes and stimulates activities of RF-1 and RF-2. It binds guanine nucleotides and has strong preference for UGA stop codons. It may interact directly with the ribosome. The stimulation of RF-1 and RF-2 is significantly reduced by GTP and GDP, but not by GMP. The protein is Peptide chain release factor 3 of Lactobacillus delbrueckii subsp. bulgaricus (strain ATCC BAA-365 / Lb-18).